We begin with the raw amino-acid sequence, 230 residues long: TPR repeat-containing protein BB_0298 (230 aa).

TPR repeat units lie at residues 69 to 102 (ARFF…NPNN) and 183 to 216 (FEFL…ASTE).

This chain is TPR repeat-containing protein BB_0298, found in Borreliella burgdorferi (strain ATCC 35210 / DSM 4680 / CIP 102532 / B31) (Borrelia burgdorferi).